We begin with the raw amino-acid sequence, 804 residues long: Probable phosphoketolase (804 aa).

Belongs to the XFP family. It depends on thiamine diphosphate as a cofactor.

This is Probable phosphoketolase from Mycolicibacterium paratuberculosis (strain ATCC BAA-968 / K-10) (Mycobacterium paratuberculosis).